A 414-amino-acid chain; its full sequence is Carboxyl-terminal-processing protease (414 aa).

The N-terminal stretch at 1-29 is a signal peptide; it reads MLRKRLQAGLCSLLLVLVLVFGPMERAIA. The 85-residue stretch at 100–184 folds into the PDZ domain; it reads YRSLKVSTSG…STVSLTVKSP (85 aa). Residues serine 310, aspartate 321, and lysine 335 each act as charge relay system in the active site.

It belongs to the peptidase S41A family.

Its subcellular location is the cellular thylakoid lumen. The catalysed reaction is The enzyme shows specific recognition of a C-terminal tripeptide, Xaa-Yaa-Zaa, in which Xaa is preferably Ala or Leu, Yaa is preferably Ala or Tyr, and Zaa is preferably Ala, but then cleaves at a variable distance from the C-terminus. A typical cleavage is -Ala-Ala-|-Arg-Ala-Ala-Lys-Glu-Asn-Tyr-Ala-Leu-Ala-Ala.. Functionally, cleavage of the 16 C-terminal residues from the D1 precursor of photosystem II (PSII). This proteolytic processing is necessary to allow the light-driven assembly of the oxygen-evolving cluster (a tetranuclear manganese), which is responsible for photosynthetic water oxidation. This is Carboxyl-terminal-processing protease (ctpA) from Picosynechococcus sp. (strain ATCC 27264 / PCC 7002 / PR-6) (Agmenellum quadruplicatum).